Here is a 394-residue protein sequence, read N- to C-terminus: Phosphatidylinositol 4-phosphate 5-kinase-like protein 1 (394 aa).

A PIPK domain is found at 36–393 (DKQSRLGLFE…RLCQWVEAHT (358 aa)).

As to quaternary structure, heterodimerizes with other type I phosphatidylinositol 4-phosphate 5-kinase.

It localises to the cytoplasm. The protein localises to the membrane. The enzyme catalyses a 1,2-diacyl-sn-glycero-3-phospho-(1D-myo-inositol 4-phosphate) + ATP = a 1,2-diacyl-sn-glycero-3-phospho-(1D-myo-inositol-4,5-bisphosphate) + ADP + H(+). Its function is as follows. May act as a scaffold to localize and regulate type I PI(4)P 5-kinases to specific compartments within the cell, where they generate PI(4,5)P2 for actin nucleation, signaling and scaffold protein recruitment and conversion to PI(3,4,5)P3. This Homo sapiens (Human) protein is Phosphatidylinositol 4-phosphate 5-kinase-like protein 1 (PIP5KL1).